The sequence spans 519 residues: Sterile alpha motif domain-containing protein 1 (519 aa).

The segment covering 1–11 (MAGPPALPPPE) has biased composition (pro residues). Disordered stretches follow at residues 1–30 (MAGP…ASPH) and 87–232 (YKGS…PVSL). The span at 12–29 (TAAAATTAAAASSSAASP) shows a compositional bias: low complexity. Residues 23 to 99 (SSSAASPHYQ…SISYRNAARV (77 aa)) form the SAMD1-like winged helix (WH) domain. The residue at position 107 (Thr107) is a Phosphothreonine. The span at 108–133 (PPAPPRVPRGGPAAPPPTPAPPPAPV) shows a compositional bias: pro residues. The segment covering 134-147 (AAPTRAPRAAAATA) has biased composition (low complexity). Position 150 is a phosphoserine (Ser150). Residues 157 to 166 (GPRAQRAAPL) are compositionally biased toward low complexity. Residues 167–217 (AAPPPAPAAPPAAAPPAGPRRAPPPAVAAREPPAPPQQQQPPPPQPQPPPE) are compositionally biased toward pro residues. Over residues 218–230 (GGAARAGGPARPV) the composition is skewed to low complexity. Ser242 bears the Phosphoserine mark. The segment covering 261–271 (EAARGRLERTR) has biased composition (basic and acidic residues). Disordered stretches follow at residues 261-381 (EAAR…PGSC) and 417-439 (PALP…KPTD). The segment covering 308–325 (KEEEDEDEDEEEEEEDNV) has biased composition (acidic residues). The SAM domain occupies 443–511 (WTVMDVVEYF…KVLQQGHFED (69 aa)).

Homopolymerize into a closed pentameric ring. Interacts (via SAM domain) with L3MBTL3 (via SAM domain); the interaction mediates L3MBTL3 binding to chromatin. Interacts (via WH domain) with KDM1A; the interaction modulates KDM1A function. Expressed to similar levels in different organs. Expressed at higher levels in bone marrow, osteoclasts and spleen. Expressed in vascular smooth muscle cells.

It is found in the nucleus. Its subcellular location is the chromosome. The protein resides in the secreted. Its function is as follows. Unmethylated CpG islands (CGIs)-binding protein which localizes to H3K4me3-decorated CGIs, where it acts as a transcriptional repressor. Tethers L3MBTL3 to chromatin and interacts with the KDM1A histone demethylase complex to modulate H3K4me2 and H3K4me3 levels at CGIs. Plays a role in atherogenesis by binding with LDL on cell surface and promoting LDL oxidation which leads to the formation of foam cell. This Mus musculus (Mouse) protein is Sterile alpha motif domain-containing protein 1.